A 75-amino-acid chain; its full sequence is Large ribosomal subunit protein bL32c (75 aa).

The disordered stretch occupies residues 49–75; it reads SPGPTTPIKPNPKKQTGRRPRSQRRRT. The segment covering 59-75 has biased composition (basic residues); the sequence is NPKKQTGRRPRSQRRRT.

This sequence belongs to the bacterial ribosomal protein bL32 family.

The protein resides in the plastid. The protein localises to the chloroplast. This is Large ribosomal subunit protein bL32c from Nephroselmis olivacea (Green alga).